We begin with the raw amino-acid sequence, 138 residues long: Proline-rich protein 34 (138 aa).

Positions 22 to 37 (SAPTSPPNPATRPAPG) are enriched in pro residues. Disordered stretches follow at residues 22 to 55 (SAPTSPPNPATRPAPGPGRRARCPQSAHPAPTRG) and 81 to 107 (APRLPHPAARARRRAWHGARLPGSPAR).

This Homo sapiens (Human) protein is Proline-rich protein 34 (PRR34).